The following is a 71-amino-acid chain: Exodeoxyribonuclease 7 small subunit (71 aa).

Belongs to the XseB family. As to quaternary structure, heterooligomer composed of large and small subunits.

It is found in the cytoplasm. The enzyme catalyses Exonucleolytic cleavage in either 5'- to 3'- or 3'- to 5'-direction to yield nucleoside 5'-phosphates.. Its function is as follows. Bidirectionally degrades single-stranded DNA into large acid-insoluble oligonucleotides, which are then degraded further into small acid-soluble oligonucleotides. The chain is Exodeoxyribonuclease 7 small subunit from Streptococcus equi subsp. equi (strain 4047).